Here is a 455-residue protein sequence, read N- to C-terminus: D-arabinitol 4-dehydrogenase (455 aa).

This sequence belongs to the mannitol dehydrogenase family. In terms of assembly, monomer.

The catalysed reaction is D-arabinitol + NAD(+) = D-xylulose + NADH + H(+). It participates in carbohydrate metabolism; D-arabinitol metabolism. This is D-arabinitol 4-dehydrogenase (dalD) from Klebsiella pneumoniae.